The following is a 274-amino-acid chain: 2,3,4,5-tetrahydropyridine-2,6-dicarboxylate N-succinyltransferase (274 aa).

Belongs to the transferase hexapeptide repeat family.

The protein resides in the cytoplasm. The catalysed reaction is (S)-2,3,4,5-tetrahydrodipicolinate + succinyl-CoA + H2O = (S)-2-succinylamino-6-oxoheptanedioate + CoA. Its pathway is amino-acid biosynthesis; L-lysine biosynthesis via DAP pathway; LL-2,6-diaminopimelate from (S)-tetrahydrodipicolinate (succinylase route): step 1/3. This chain is 2,3,4,5-tetrahydropyridine-2,6-dicarboxylate N-succinyltransferase, found in Erwinia tasmaniensis (strain DSM 17950 / CFBP 7177 / CIP 109463 / NCPPB 4357 / Et1/99).